The chain runs to 461 residues: Chromosomal replication initiator protein DnaA (461 aa).

The interval 1-68 (MINAWAQIEH…EKAAASVLGS (68 aa)) is domain I, interacts with DnaA modulators. Residues 68 to 118 (SVPTITVVSGEEPAAAPRPVQVPAQKRPAAARTSGAEQMGLPLHYASRSAD) are domain II. The tract at residues 119-336 (SIKWMHSFDE…SCLRNLLLKA (218 aa)) is domain III, AAA+ region. The ATP site is built by glycine 162, glycine 164, lysine 165, and threonine 166. Positions 337–461 (RLLNQQITMD…VERNGRIIHP (125 aa)) are domain IV, binds dsDNA.

Belongs to the DnaA family. As to quaternary structure, oligomerizes as a right-handed, spiral filament on DNA at oriC.

Its subcellular location is the cytoplasm. Plays an essential role in the initiation and regulation of chromosomal replication. ATP-DnaA binds to the origin of replication (oriC) to initiate formation of the DNA replication initiation complex once per cell cycle. Binds the DnaA box (a 9 base pair repeat at the origin) and separates the double-stranded (ds)DNA. Forms a right-handed helical filament on oriC DNA; dsDNA binds to the exterior of the filament while single-stranded (ss)DNA is stabiized in the filament's interior. The ATP-DnaA-oriC complex binds and stabilizes one strand of the AT-rich DNA unwinding element (DUE), permitting loading of DNA polymerase. After initiation quickly degrades to an ADP-DnaA complex that is not apt for DNA replication. Binds acidic phospholipids. The polypeptide is Chromosomal replication initiator protein DnaA (Oleidesulfovibrio alaskensis (strain ATCC BAA-1058 / DSM 17464 / G20) (Desulfovibrio alaskensis)).